We begin with the raw amino-acid sequence, 870 residues long: Aldehyde-alcohol dehydrogenase 2 (870 aa).

Cysteine 252 is an active-site residue. Glycine 431 to glycine 436 serves as a coordination point for NAD(+).

It in the N-terminal section; belongs to the aldehyde dehydrogenase family. The protein in the C-terminal section; belongs to the iron-containing alcohol dehydrogenase family. As to quaternary structure, seems to form a rod shaped homomer composed of at least 20 identical subunits. Zn(2+) is required as a cofactor. Requires Fe(2+) as cofactor.

It carries out the reaction a primary alcohol + NAD(+) = an aldehyde + NADH + H(+). It catalyses the reaction a secondary alcohol + NAD(+) = a ketone + NADH + H(+). The enzyme catalyses acetaldehyde + NAD(+) + CoA = acetyl-CoA + NADH + H(+). Its function is as follows. This enzyme has two NAD(+)-dependent activities: ADH and ACDH. May be a critical enzyme in the fermentative pathway. This Entamoeba histolytica (strain ATCC 30459 / HM-1:IMSS / ABRM) protein is Aldehyde-alcohol dehydrogenase 2 (ADH2).